The chain runs to 856 residues: Envelope glycoprotein gp160 (856 aa).

Residues 1–31 (MRVKGIRRNCQHLWIWGTMLFGMWMICSAVE) form the signal peptide. Over 32 to 684 (QLWVTVYYGV…ITNWLWYIKI (653 aa)) the chain is Extracellular. Residues cysteine 53 and cysteine 73 are joined by a disulfide bond. 13 N-linked (GlcNAc...) asparagine; by host glycosylation sites follow: asparagine 87, asparagine 134, asparagine 140, asparagine 151, asparagine 155, asparagine 183, asparagine 197, asparagine 234, asparagine 241, asparagine 262, asparagine 276, asparagine 289, and asparagine 295. 5 disulfide bridges follow: cysteine 118–cysteine 205, cysteine 125–cysteine 196, cysteine 130–cysteine 152, cysteine 218–cysteine 247, and cysteine 228–cysteine 239. The V1 stretch occupies residues 130–151 (CIDKNITDWENKTIIGGGEVKN). Positions 152-196 (CSFNITTSIRDKVHKEYALFYKLDVVPIKSNNDSSTYTRYRLIHC) are V2. The segment at 296 to 329 (CTRPNNNVRRRHIHIGPGRAFYTGEIRGNIRQAH) is V3. Residues cysteine 296 and cysteine 330 are joined by a disulfide bond. 4 N-linked (GlcNAc...) asparagine; by host glycosylation sites follow: asparagine 331, asparagine 338, asparagine 354, and asparagine 360. The segment at 362–372 (SSGGDPEIVTH) is CD4-binding loop. 2 disulfides stabilise this stretch: cysteine 376–cysteine 444 and cysteine 383–cysteine 417. The interval 383 to 417 (CDSTQLFNSTWNVTGISTEGNNNTEENGDTITLPC) is V4. N-linked (GlcNAc...) asparagine; by host glycosylation is found at asparagine 390, asparagine 394, asparagine 404, asparagine 447, and asparagine 459. 2 V5 regions span residues 460–470 (SSSREEIFRPG) and 462–470 (SREEIFRPG). The interval 511–532 (AVGAIGAMFLGFLGAAGSTMGA) is fusion peptide. The segment at 574 to 592 (KQLQARVLAVERYLRDQQL) is immunosuppression. A disulfide bond links cysteine 598 and cysteine 604. N-linked (GlcNAc...) asparagine; by host glycosylation is found at asparagine 611, asparagine 616, asparagine 625, and asparagine 637. The stretch at 633–667 (REIDNYTSLIYNLIEESQNQQEKNEQELLELDKWA) forms a coiled coil. The interval 662–683 (ELDKWASLWNWFSITNWLWYIK) is MPER; binding to GalCer. Residues 685 to 705 (FIMIVGGLVGLRIVFSVLSIV) form a helical membrane-spanning segment. Over 706–856 (NRVRQGYSPL…IRQGLERALL (151 aa)) the chain is Cytoplasmic. Positions 712–715 (YSPL) match the YXXL motif; contains endocytosis signal motif. A disordered region spans residues 716–742 (SFQTHLPTPRGPDRPEGTEEEGGERDR). Residues cysteine 764 and cysteine 837 are each lipidated (S-palmitoyl cysteine; by host). Positions 855 to 856 (LL) match the Di-leucine internalization motif motif.

Belongs to the HIV-1 env protein family. In terms of assembly, the mature envelope protein (Env) consists of a homotrimer of non-covalently associated gp120-gp41 heterodimers. The resulting complex protrudes from the virus surface as a spike. There seems to be as few as 10 spikes on the average virion. Interacts with host CD4, CCR5 and CXCR4. Gp120 also interacts with the C-type lectins CD209/DC-SIGN and CLEC4M/DC-SIGNR (collectively referred to as DC-SIGN(R)). Gp120 and gp41 interact with GalCer. Gp120 interacts with host ITGA4/ITGB7 complex; on CD4+ T-cells, this interaction results in rapid activation of integrin ITGAL/LFA-1, which facilitates efficient cell-to-cell spreading of HIV-1. Gp120 interacts with cell-associated heparan sulfate; this interaction increases virus infectivity on permissive cells and may be involved in infection of CD4- cells. As to quaternary structure, the mature envelope protein (Env) consists of a homotrimer of non-covalently associated gp120-gp41 heterodimers. The resulting complex protrudes from the virus surface as a spike. There seems to be as few as 10 spikes on the average virion. Post-translationally, highly glycosylated by host. The high number of glycan on the protein is reffered to as 'glycan shield' because it contributes to hide protein sequence from adaptive immune system. Palmitoylation of the transmembrane protein and of Env polyprotein (prior to its proteolytic cleavage) is essential for their association with host cell membrane lipid rafts. Palmitoylation is therefore required for envelope trafficking to classical lipid rafts, but not for viral replication. In terms of processing, specific enzymatic cleavages in vivo yield mature proteins. Envelope glycoproteins are synthesized as an inactive precursor that is heavily N-glycosylated and processed likely by host cell furin in the Golgi to yield the mature SU and TM proteins. The cleavage site between SU and TM requires the minimal sequence [KR]-X-[KR]-R. About 2 of the 9 disulfide bonds of gp41 are reduced by P4HB/PDI, following binding to CD4 receptor.

The protein resides in the virion membrane. It localises to the host cell membrane. It is found in the host endosome membrane. In terms of biological role, oligomerizes in the host endoplasmic reticulum into predominantly trimers. In a second time, gp160 transits in the host Golgi, where glycosylation is completed. The precursor is then proteolytically cleaved in the trans-Golgi and thereby activated by cellular furin or furin-like proteases to produce gp120 and gp41. Functionally, attaches the virus to the host lymphoid cell by binding to the primary receptor CD4. This interaction induces a structural rearrangement creating a high affinity binding site for a chemokine coreceptor like CXCR4 and/or CCR5. Acts as a ligand for CD209/DC-SIGN and CLEC4M/DC-SIGNR, which are respectively found on dendritic cells (DCs), and on endothelial cells of liver sinusoids and lymph node sinuses. These interactions allow capture of viral particles at mucosal surfaces by these cells and subsequent transmission to permissive cells. HIV subverts the migration properties of dendritic cells to gain access to CD4+ T-cells in lymph nodes. Virus transmission to permissive T-cells occurs either in trans (without DCs infection, through viral capture and transmission), or in cis (following DCs productive infection, through the usual CD4-gp120 interaction), thereby inducing a robust infection. In trans infection, bound virions remain infectious over days and it is proposed that they are not degraded, but protected in non-lysosomal acidic organelles within the DCs close to the cell membrane thus contributing to the viral infectious potential during DCs' migration from the periphery to the lymphoid tissues. On arrival at lymphoid tissues, intact virions recycle back to DCs' cell surface allowing virus transmission to CD4+ T-cells. Acts as a class I viral fusion protein. Under the current model, the protein has at least 3 conformational states: pre-fusion native state, pre-hairpin intermediate state, and post-fusion hairpin state. During fusion of viral and target intracellular membranes, the coiled coil regions (heptad repeats) assume a trimer-of-hairpins structure, positioning the fusion peptide in close proximity to the C-terminal region of the ectodomain. The formation of this structure appears to drive apposition and subsequent fusion of viral and target cell membranes. Complete fusion occurs in host cell endosomes and is dynamin-dependent, however some lipid transfer might occur at the plasma membrane. The virus undergoes clathrin-dependent internalization long before endosomal fusion, thus minimizing the surface exposure of conserved viral epitopes during fusion and reducing the efficacy of inhibitors targeting these epitopes. Membranes fusion leads to delivery of the nucleocapsid into the cytoplasm. The chain is Envelope glycoprotein gp160 from Homo sapiens (Human).